A 512-amino-acid chain; its full sequence is Histidine ammonia-lyase (512 aa).

Residues 141 to 143 (ASG) constitute a cross-link (5-imidazolinone (Ala-Gly)). Serine 142 is modified (2,3-didehydroalanine (Ser)).

This sequence belongs to the PAL/histidase family. Post-translationally, contains an active site 4-methylidene-imidazol-5-one (MIO), which is formed autocatalytically by cyclization and dehydration of residues Ala-Ser-Gly.

It is found in the cytoplasm. It carries out the reaction L-histidine = trans-urocanate + NH4(+). It functions in the pathway amino-acid degradation; L-histidine degradation into L-glutamate; N-formimidoyl-L-glutamate from L-histidine: step 1/3. The polypeptide is Histidine ammonia-lyase (Bacillus velezensis (strain DSM 23117 / BGSC 10A6 / LMG 26770 / FZB42) (Bacillus amyloliquefaciens subsp. plantarum)).